The chain runs to 204 residues: Flavin-dependent thymidylate synthase (204 aa).

The ThyX domain occupies M1–G204. FAD contacts are provided by residues S50 and R74–R76. DUMP contacts are provided by residues E71–R74, S84–R86, and K143. The short motif at R74 to S84 is the ThyX motif element. FAD is bound by residues N159–R161 and N165. R170 contributes to the dUMP binding site. R170 serves as the catalytic Involved in ionization of N3 of dUMP, leading to its activation.

This sequence belongs to the thymidylate synthase ThyX family. In terms of assembly, homotetramer. FAD is required as a cofactor.

It carries out the reaction dUMP + (6R)-5,10-methylene-5,6,7,8-tetrahydrofolate + NADPH + H(+) = dTMP + (6S)-5,6,7,8-tetrahydrofolate + NADP(+). Its pathway is pyrimidine metabolism; dTTP biosynthesis. Its function is as follows. Catalyzes the reductive methylation of 2'-deoxyuridine-5'-monophosphate (dUMP) to 2'-deoxythymidine-5'-monophosphate (dTMP) while utilizing 5,10-methylenetetrahydrofolate (mTHF) as the methyl donor, and NADPH and FADH(2) as the reductant. The sequence is that of Flavin-dependent thymidylate synthase from Wolinella succinogenes (strain ATCC 29543 / DSM 1740 / CCUG 13145 / JCM 31913 / LMG 7466 / NCTC 11488 / FDC 602W) (Vibrio succinogenes).